We begin with the raw amino-acid sequence, 565 residues long: CTP synthase (565 aa).

Residues 1-272 (MARPKNVKHI…DLRVMKKLGL (272 aa)) are amidoligase domain. A CTP-binding site is contributed by Ser18. UTP is bound at residue Ser18. ATP is bound at residue 19–24 (SLGKGI). Tyr59 contacts L-glutamine. Asp76 serves as a coordination point for ATP. Mg(2+) contacts are provided by Asp76 and Glu146. Residues 153–155 (DIE), 193–198 (KTKPTQ), and Lys229 contribute to the CTP site. UTP is bound by residues 193–198 (KTKPTQ) and Lys229. The Glutamine amidotransferase type-1 domain occupies 299 to 543 (TIGVCGKYTE…VAAAKEYEKG (245 aa)). Gly363 is an L-glutamine binding site. Catalysis depends on Cys390, which acts as the Nucleophile; for glutamine hydrolysis. Residues 391–394 (LGMQ), Glu414, and Arg471 contribute to the L-glutamine site. Catalysis depends on residues His516 and Glu518.

Belongs to the CTP synthase family. Homotetramer.

It catalyses the reaction UTP + L-glutamine + ATP + H2O = CTP + L-glutamate + ADP + phosphate + 2 H(+). The catalysed reaction is L-glutamine + H2O = L-glutamate + NH4(+). The enzyme catalyses UTP + NH4(+) + ATP = CTP + ADP + phosphate + 2 H(+). It participates in pyrimidine metabolism; CTP biosynthesis via de novo pathway; CTP from UDP: step 2/2. Allosterically activated by GTP, when glutamine is the substrate; GTP has no effect on the reaction when ammonia is the substrate. The allosteric effector GTP functions by stabilizing the protein conformation that binds the tetrahedral intermediate(s) formed during glutamine hydrolysis. Inhibited by the product CTP, via allosteric rather than competitive inhibition. In terms of biological role, catalyzes the ATP-dependent amination of UTP to CTP with either L-glutamine or ammonia as the source of nitrogen. Regulates intracellular CTP levels through interactions with the four ribonucleotide triphosphates. This chain is CTP synthase, found in Chlorobium phaeobacteroides (strain DSM 266 / SMG 266 / 2430).